We begin with the raw amino-acid sequence, 560 residues long: DNA ligase B (560 aa).

The active-site N6-AMP-lysine intermediate is K124.

The protein belongs to the NAD-dependent DNA ligase family. LigB subfamily.

It carries out the reaction NAD(+) + (deoxyribonucleotide)n-3'-hydroxyl + 5'-phospho-(deoxyribonucleotide)m = (deoxyribonucleotide)n+m + AMP + beta-nicotinamide D-nucleotide.. Its function is as follows. Catalyzes the formation of phosphodiester linkages between 5'-phosphoryl and 3'-hydroxyl groups in double-stranded DNA using NAD as a coenzyme and as the energy source for the reaction. The chain is DNA ligase B from Escherichia coli (strain SMS-3-5 / SECEC).